Consider the following 398-residue polypeptide: 4-hydroxy-3-methylbut-2-enyl diphosphate reductase (398 aa).

C66 provides a ligand contact to [4Fe-4S] cluster. H96 contacts (2E)-4-hydroxy-3-methylbut-2-enyl diphosphate. H96 contacts dimethylallyl diphosphate. Residue H96 coordinates isopentenyl diphosphate. C157 provides a ligand contact to [4Fe-4S] cluster. H185 is a (2E)-4-hydroxy-3-methylbut-2-enyl diphosphate binding site. H185 contacts dimethylallyl diphosphate. Isopentenyl diphosphate is bound at residue H185. E187 serves as the catalytic Proton donor. A (2E)-4-hydroxy-3-methylbut-2-enyl diphosphate-binding site is contributed by T250. C288 provides a ligand contact to [4Fe-4S] cluster. Residues S317, S318, N319, and S379 each contribute to the (2E)-4-hydroxy-3-methylbut-2-enyl diphosphate site. Residues S317, S318, N319, and S379 each contribute to the dimethylallyl diphosphate site. Isopentenyl diphosphate is bound by residues S317, S318, N319, and S379.

This sequence belongs to the IspH family. The cofactor is [4Fe-4S] cluster.

It carries out the reaction isopentenyl diphosphate + 2 oxidized [2Fe-2S]-[ferredoxin] + H2O = (2E)-4-hydroxy-3-methylbut-2-enyl diphosphate + 2 reduced [2Fe-2S]-[ferredoxin] + 2 H(+). The enzyme catalyses dimethylallyl diphosphate + 2 oxidized [2Fe-2S]-[ferredoxin] + H2O = (2E)-4-hydroxy-3-methylbut-2-enyl diphosphate + 2 reduced [2Fe-2S]-[ferredoxin] + 2 H(+). Its pathway is isoprenoid biosynthesis; dimethylallyl diphosphate biosynthesis; dimethylallyl diphosphate from (2E)-4-hydroxy-3-methylbutenyl diphosphate: step 1/1. It participates in isoprenoid biosynthesis; isopentenyl diphosphate biosynthesis via DXP pathway; isopentenyl diphosphate from 1-deoxy-D-xylulose 5-phosphate: step 6/6. Catalyzes the conversion of 1-hydroxy-2-methyl-2-(E)-butenyl 4-diphosphate (HMBPP) into a mixture of isopentenyl diphosphate (IPP) and dimethylallyl diphosphate (DMAPP). Acts in the terminal step of the DOXP/MEP pathway for isoprenoid precursor biosynthesis. The sequence is that of 4-hydroxy-3-methylbut-2-enyl diphosphate reductase from Synechococcus sp. (strain ATCC 27144 / PCC 6301 / SAUG 1402/1) (Anacystis nidulans).